An 856-amino-acid chain; its full sequence is Villin-like protein (856 aa).

6 Gelsolin-like repeats span residues 22 to 74 (RKMV…EAQG), 146 to 186 (VSAT…SEKA), 263 to 307 (LVVL…QERK), 401 to 450 (LHRQ…DEIE), 521 to 561 (TRTM…DQRE), and 624 to 665 (LVLA…WKEA). The interval 762-796 (SQDSSENDLVRSPKSAGSRTSSSVSSTSATINGGL) is disordered. Positions 776 to 791 (SAGSRTSSSVSSTSAT) are enriched in low complexity. In terms of domain architecture, HP spans 790–856 (ATINGGLRRE…RQEKKQLGFF (67 aa)).

It belongs to the villin/gelsolin family. Ubiquitously expressed in 16 tissues examined.

Functionally, possible tumor suppressor. The polypeptide is Villin-like protein (VILL) (Homo sapiens (Human)).